The following is a 263-amino-acid chain: MTFAAPMSSKEARQMIRNNEWVKPTAGVANGYTQANLVVLPKELAFEFLLFCQRNPKPCPVLDVTEPGSWEPSMVAPGADLRVDLPKYRVYRNGELTEERTDIIDLWDKDMVGFLLGCSFTFEHALVNNGIPVRHIQENCNVPMYKTNIPCVKAGRFEGPMVVSMRPIPHKDVVRAVQVTSRFPSVHGAPIHIGDPKLIGIHDIYKPDFGDPVTIREGETPVFWACGVTPQAVAMEVKPDIMITHAPGHMFITDLRDEQLGVL.

This sequence belongs to the D-glutamate cyclase family.

This chain is Putative hydro-lyase GK2103, found in Geobacillus kaustophilus (strain HTA426).